Consider the following 242-residue polypeptide: Uridylate kinase (242 aa).

ATP is bound at residue 15–18 (KLSG). Residue Gly57 participates in UMP binding. Residues Gly58 and Arg62 each coordinate ATP. UMP-binding positions include Asp78 and 139–146 (TGNPFFTT). ATP contacts are provided by Thr166, Tyr172, and Asp175.

It belongs to the UMP kinase family. Homohexamer.

Its subcellular location is the cytoplasm. The catalysed reaction is UMP + ATP = UDP + ADP. The protein operates within pyrimidine metabolism; CTP biosynthesis via de novo pathway; UDP from UMP (UMPK route): step 1/1. Its activity is regulated as follows. Inhibited by UTP. Its function is as follows. Catalyzes the reversible phosphorylation of UMP to UDP. The protein is Uridylate kinase of Acinetobacter baylyi (strain ATCC 33305 / BD413 / ADP1).